A 259-amino-acid polypeptide reads, in one-letter code: Putative protein-disulfide oxidoreductase RBE_1288 (259 aa).

The N-terminal stretch at 1 to 20 (MRNSFITLIFLLLLSGCSEE) is a signal peptide. The segment at 25–54 (VEQESSESITPAQASTSDENNNQTTETTTP) is disordered. Over residues 33–42 (ITPAQASTSD) the composition is skewed to polar residues. Over residues 43–54 (ENNNQTTETTTP) the composition is skewed to low complexity. In terms of domain architecture, Thioredoxin spans 47 to 251 (QTTETTTPAV…ISAAIDKAIE (205 aa)). Cysteines 104 and 107 form a disulfide.

Belongs to the thioredoxin family. DsbA subfamily.

The protein resides in the periplasm. May be required for disulfide bond formation in some proteins. In Rickettsia bellii (strain RML369-C), this protein is Putative protein-disulfide oxidoreductase RBE_1288.